We begin with the raw amino-acid sequence, 351 residues long: tRNA pseudouridine synthase D (351 aa).

D96 acts as the Nucleophile in catalysis. Residues 174 to 304 (GAPNYFGPQR…MKPERRPLVA (131 aa)) form the TRUD domain. The interval 244 to 268 (VLPGEPEPSGAGPTGPLWGDGGTLA) is disordered.

This sequence belongs to the pseudouridine synthase TruD family.

It carries out the reaction uridine(13) in tRNA = pseudouridine(13) in tRNA. Responsible for synthesis of pseudouridine from uracil-13 in transfer RNAs. In Marinobacter nauticus (strain ATCC 700491 / DSM 11845 / VT8) (Marinobacter aquaeolei), this protein is tRNA pseudouridine synthase D.